A 551-amino-acid chain; its full sequence is RanBD1 domain-containing protein C584.03c (551 aa).

The RanBD1 domain occupies 1 to 309; that stretch reads MDELLNVASH…LLLKYADDET (309 aa). S441 bears the Phosphoserine mark. The segment at 522-551 is disordered; sequence SVIPHSEPESSSKVINCQAKLNVEKEKKNP.

It is found in the nucleus. This is RanBD1 domain-containing protein C584.03c from Schizosaccharomyces pombe (strain 972 / ATCC 24843) (Fission yeast).